The primary structure comprises 691 residues: Tumor necrosis factor alpha-induced protein 2 (691 aa).

Residues 9–111 form a disordered region; the sequence is QGFPGQQSVP…KPRPELDGPL (103 aa). Positions 12 to 31 are enriched in polar residues; the sequence is PGQQSVPGTLNFAVSPQKPR. The span at 33 to 45 shows a compositional bias: low complexity; the sequence is TSEAESETSMSEA. A compositionally biased stretch (basic and acidic residues) spans 91–107; it reads QPRLSDLEVQPKPRPEL.

It belongs to the SEC6 family.

In terms of biological role, may play a role as a mediator of inflammation and angiogenesis. The protein is Tumor necrosis factor alpha-induced protein 2 (Tnfaip2) of Mus musculus (Mouse).